A 307-amino-acid chain; its full sequence is GMP synthase [glutamine-hydrolyzing] subunit B (307 aa).

Positions 1-184 constitute a GMPS ATP-PPase domain; it reads MWENFIEEKV…LGLPEKIYNR (184 aa). 27 to 33 contacts ATP; it reads SGGVDSS.

In terms of assembly, heterodimer composed of a glutamine amidotransferase subunit (A) and a GMP-binding subunit (B).

It carries out the reaction XMP + L-glutamine + ATP + H2O = GMP + L-glutamate + AMP + diphosphate + 2 H(+). Its pathway is purine metabolism; GMP biosynthesis; GMP from XMP (L-Gln route): step 1/1. Its function is as follows. Catalyzes the synthesis of GMP from XMP. This Thermococcus kodakarensis (strain ATCC BAA-918 / JCM 12380 / KOD1) (Pyrococcus kodakaraensis (strain KOD1)) protein is GMP synthase [glutamine-hydrolyzing] subunit B.